Reading from the N-terminus, the 507-residue chain is tRNA(Ile)-lysidine synthase (507 aa).

Residue 24–29 (SGGGDS) participates in ATP binding. The CMP/dCMP-type deaminase domain occupies 370–500 (PPEEAHMAEA…KLLRDFFARL (131 aa)). Residues histidine 420, cysteine 445, and cysteine 448 each coordinate Zn(2+).

Belongs to the tRNA(Ile)-lysidine synthase family.

The protein resides in the cytoplasm. It carries out the reaction cytidine(34) in tRNA(Ile2) + L-lysine + ATP = lysidine(34) in tRNA(Ile2) + AMP + diphosphate + H(+). Its function is as follows. Ligates lysine onto the cytidine present at position 34 of the AUA codon-specific tRNA(Ile) that contains the anticodon CAU, in an ATP-dependent manner. Cytidine is converted to lysidine, thus changing the amino acid specificity of the tRNA from methionine to isoleucine. The chain is tRNA(Ile)-lysidine synthase (tilS) from Thermus thermophilus (strain ATCC 27634 / DSM 579 / HB8).